Reading from the N-terminus, the 372-residue chain is NAD(P)H-quinone oxidoreductase subunit 1 (372 aa).

The next 8 helical transmembrane spans lie at 31–51, 65–85, 97–117, 128–148, 176–196, 254–276, 304–324, and 347–367; these read PLPM…VVWL, PEFI…KLVL, LLFT…YLIL, VGLG…GLLM, LALS…VDIV, FALF…AVLY, LIFA…LIFL, and FLLP…LAFP.

This sequence belongs to the complex I subunit 1 family. As to quaternary structure, NDH-1 is composed of at least 11 different subunits.

The protein resides in the cellular thylakoid membrane. It carries out the reaction a plastoquinone + NADH + (n+1) H(+)(in) = a plastoquinol + NAD(+) + n H(+)(out). It catalyses the reaction a plastoquinone + NADPH + (n+1) H(+)(in) = a plastoquinol + NADP(+) + n H(+)(out). Its function is as follows. NDH-1 shuttles electrons from an unknown electron donor, via FMN and iron-sulfur (Fe-S) centers, to quinones in the respiratory and/or the photosynthetic chain. The immediate electron acceptor for the enzyme in this species is believed to be plastoquinone. Couples the redox reaction to proton translocation, and thus conserves the redox energy in a proton gradient. This chain is NAD(P)H-quinone oxidoreductase subunit 1, found in Leptolyngbya boryana (Plectonema boryanum).